Reading from the N-terminus, the 838-residue chain is Envelope glycoprotein H (838 aa).

The N-terminal stretch at 1–18 (MGPGLWVVMGVLVGVAGG) is a signal peptide. Residues 21-803 (TYWTEQIDPW…DTLPIATIAP (783 aa)) lie on the Virion surface side of the membrane. Residues asparagine 73 and asparagine 120 are each glycosylated (N-linked (GlcNAc...) asparagine; by host). Over residues 171–190 (GLTFPRGDDGATERHPDGRR) the composition is skewed to basic and acidic residues. The disordered stretch occupies residues 171 to 207 (GLTFPRGDDGATERHPDGRRNAPPPGPPAGTPRHPTT). N-linked (GlcNAc...) asparagine; by host glycans are attached at residues asparagine 208 and asparagine 216. The cysteines at positions 258 and 429 are disulfide-linked. Residues 259 to 323 (DAALVRARYG…PAGPRYRVFV (65 aa)) are interaction with gL. 4 N-linked (GlcNAc...) asparagine; by host glycosylation sites follow: asparagine 332, asparagine 437, asparagine 670, and asparagine 784. Residues 804–824 (GFLAASALGVVMITAALAGIL) form a helical membrane-spanning segment. The Intravirion portion of the chain corresponds to 825–838 (RVVRTCVPFLWRRE).

This sequence belongs to the herpesviridae glycoprotein H family. Interacts with glycoprotein L (gL); this interaction is necessary for the correct processing and cell surface expression of gH. The heterodimer gH/gL seems to interact with gB trimers during fusion. Interacts with host integrins ITGAV/ITGB3 to mediate viral entry into epithelial cells. N-glycosylated, O-glycosylated, and sialylated.

It localises to the virion membrane. Its subcellular location is the host cell membrane. The protein resides in the host endosome membrane. In terms of biological role, the heterodimer glycoprotein H-glycoprotein L is required for the fusion of viral and plasma membranes leading to virus entry into the host cell. Following initial binding to host receptor, membrane fusion is mediated by the fusion machinery composed of gB and the heterodimer gH/gL. May also be involved in the fusion between the virion envelope and the outer nuclear membrane during virion morphogenesis. Interaction with host integrins ITGAV/ITGB3 triggers release of cytosolic Ca(2+) and FAK phosphorylation leading to efficient viral entry into host genital tract epithelial cells. This chain is Envelope glycoprotein H, found in Human herpesvirus 2 (strain HG52) (HHV-2).